A 264-amino-acid chain; its full sequence is MNNQSAKKSPTRLTYISDIIEISPYLRRLVLSGEQLANFPADQQGAYVKVLIPQPGETTVNMTLTGPNAAIKRSYTIREFDPVRGQLSLDFVINKHTGPATDWAKLANVGDTVAIAGPGPLKMNRFDFNDYLLFGDSTSINAVDALIKRLPATAKGHIIMLVNSHQEQALLSQHPLLKTHWLVLNDSITAEQQIDWLLDKLELFGDLPAVTQVFVGLEATQVRVIKQYLLEQQQLPLSSISATGYWKRNTDADTFGKQKQMQPL.

The 119-residue stretch at 9 to 127 folds into the FAD-binding FR-type domain; the sequence is SPTRLTYISD…PGPLKMNRFD (119 aa). Positions 73, 74, 76, 90, 92, 96, 100, 101, 247, 249, 250, and 252 each coordinate FAD.

This sequence belongs to the SIP oxidoreductase family. Requires FAD as cofactor.

Its function is as follows. Ferric-siderophore reductase involved in iron removal from the siderophores after their transport into the cell. Catalyzes the reduction of the ferric iron bound to the hydroxamate siderophores produced by Shewanella to ferrous iron. Can use a ferredoxin as electron donor. Despite the clear evidence for the interaction with NAD(P)H, no direct reduction of the enzyme by these compounds is observed, nor consumption of NAD(P)H, suggesting that NADH and NADPH are not the physiological electron donors. The polypeptide is Ferric siderophore reductase (Shewanella frigidimarina (strain NCIMB 400)).